We begin with the raw amino-acid sequence, 967 residues long: Alanine--tRNA ligase, cytoplasmic (967 aa).

Residues H605, H609, C724, and H728 each coordinate Zn(2+).

It belongs to the class-II aminoacyl-tRNA synthetase family. In terms of assembly, monomer. The cofactor is Zn(2+). In terms of processing, the N-terminus is blocked.

It localises to the cytoplasm. It catalyses the reaction tRNA(Ala) + L-alanine + ATP = L-alanyl-tRNA(Ala) + AMP + diphosphate. In terms of biological role, catalyzes the attachment of alanine to tRNA(Ala) in a two-step reaction: alanine is first activated by ATP to form Ala-AMP and then transferred to the acceptor end of tRNA(Ala). Also edits incorrectly charged tRNA(Ala) via its editing domain. This Bombyx mori (Silk moth) protein is Alanine--tRNA ligase, cytoplasmic.